A 310-amino-acid polypeptide reads, in one-letter code: Glutarate 2-hydroxylase (310 aa).

3 residues coordinate Fe cation: His160, Asp162, and His277.

The protein belongs to the glutarate hydroxylase family. Homotetramer. Fe(2+) is required as a cofactor.

The enzyme catalyses glutarate + 2-oxoglutarate + O2 = (S)-2-hydroxyglutarate + succinate + CO2. The protein operates within amino-acid degradation. In terms of biological role, acts as an alpha-ketoglutarate-dependent dioxygenase catalyzing hydroxylation of glutarate (GA) to L-2-hydroxyglutarate (L2HG). Functions in a L-lysine degradation pathway that proceeds via cadaverine, glutarate and L-2-hydroxyglutarate. The protein is Glutarate 2-hydroxylase of Shigella flexneri.